A 171-amino-acid polypeptide reads, in one-letter code: uncharacterized protein (171 aa).

This is an uncharacterized protein from Mycoplasma genitalium (strain ATCC 33530 / DSM 19775 / NCTC 10195 / G37) (Mycoplasmoides genitalium).